Reading from the N-terminus, the 515-residue chain is Maturase K (515 aa).

This sequence belongs to the intron maturase 2 family. MatK subfamily.

The protein localises to the plastid. It is found in the chloroplast. Its function is as follows. Usually encoded in the trnK tRNA gene intron. Probably assists in splicing its own and other chloroplast group II introns. The polypeptide is Maturase K (Alpinia calcarata (Snap ginger)).